The sequence spans 628 residues: Kelch-like protein 14 (628 aa).

One can recognise a BTB domain in the interval 33–151; that stretch reads CDVTLTAQGQ…LYTANVTLSL (119 aa). The interval 69 to 115 is disordered; sequence GGGVGGQDGLGAPKDQQQPPQQQPSQQQQPPPQEEPGTPSSSPDDKL. A compositionally biased stretch (low complexity) spans 84–96; sequence QQQPPQQQPSQQQ. The BACK domain maps to 210 to 279; the sequence is VEDVLLLNFE…PAPELVERVQ (70 aa). Kelch repeat units follow at residues 323–372, 373–424, 425–471, 473–518, 520–570, and 572–620; these read MLLL…EVEN, FLFV…RLDK, HLYV…VHNG, IYIS…VMND, LYAI…VLDD, and IYLV…TVIL.

Interacts with TOR1A, preferentially with the ATP-free form.

The protein localises to the cytoplasm. Its subcellular location is the cytosol. It localises to the endoplasmic reticulum membrane. The polypeptide is Kelch-like protein 14 (KLHL14) (Homo sapiens (Human)).